The chain runs to 831 residues: Periplasmic nitrate reductase (831 aa).

The tat-type signal signal peptide spans 1 to 31; that stretch reads MTISRRDLLKAQAAGIAAMAANIPLSSQAPA. In terms of domain architecture, 4Fe-4S Mo/W bis-MGD-type spans 41-97; the sequence is ITWSKAPCRFCGTGCGVMVGVKEGRVVATHGDLLAEVNRGLNCVKGYFLSKIMYGAD. [4Fe-4S] cluster-binding residues include Cys48, Cys51, Cys55, and Cys83. Mo-bis(molybdopterin guanine dinucleotide) is bound by residues Lys85, Gln152, Asn177, Cys181, 214 to 221, 245 to 249, 264 to 266, Met375, Gln379, Asn485, 511 to 512, Lys534, Asp561, and 721 to 730; these read WGSNMAEM, STFTH, GTD, SD, and TGRVLEHWHS. Trp797 is a binding site for substrate. Mo-bis(molybdopterin guanine dinucleotide) is bound by residues Asn805 and Lys822.

This sequence belongs to the prokaryotic molybdopterin-containing oxidoreductase family. NasA/NapA/NarB subfamily. Component of the periplasmic nitrate reductase NapAB complex composed of NapA and NapB. Requires [4Fe-4S] cluster as cofactor. The cofactor is Mo-bis(molybdopterin guanine dinucleotide). Post-translationally, predicted to be exported by the Tat system. The position of the signal peptide cleavage has not been experimentally proven.

It is found in the periplasm. It carries out the reaction 2 Fe(II)-[cytochrome] + nitrate + 2 H(+) = 2 Fe(III)-[cytochrome] + nitrite + H2O. Functionally, catalytic subunit of the periplasmic nitrate reductase complex NapAB. Receives electrons from NapB and catalyzes the reduction of nitrate to nitrite. This chain is Periplasmic nitrate reductase, found in Paracoccus pantotrophus (Thiosphaera pantotropha).